A 119-amino-acid chain; its full sequence is Large ribosomal subunit protein uL18 (119 aa).

It belongs to the universal ribosomal protein uL18 family. In terms of assembly, part of the 50S ribosomal subunit; part of the 5S rRNA/L5/L18/L25 subcomplex. Contacts the 5S and 23S rRNAs.

In terms of biological role, this is one of the proteins that bind and probably mediate the attachment of the 5S RNA into the large ribosomal subunit, where it forms part of the central protuberance. This is Large ribosomal subunit protein uL18 from Mycoplasmoides gallisepticum (strain R(low / passage 15 / clone 2)) (Mycoplasma gallisepticum).